Consider the following 89-residue polypeptide: Large ribosomal subunit protein bL27 (89 aa).

The tract at residues 1–22 (MAHKKAGGSSRNGRDSAGRRLG) is disordered.

The protein belongs to the bacterial ribosomal protein bL27 family.

In Sphingopyxis alaskensis (strain DSM 13593 / LMG 18877 / RB2256) (Sphingomonas alaskensis), this protein is Large ribosomal subunit protein bL27.